The chain runs to 360 residues: MKPSIVAKLEALQERHEEVLAHLGDADVIADQERFRALSREYAQLTDVTNCFKAWSAVQDDLKAAEIMLDDPEMREMAQEEIRDAKVRNEELEQQLQLLLLPKDPDDERNCFLEVRAGTGGDEAAIFAGDLFRMYSRYAESRRWKVEVISANDGEHGGYKEIIAKVSGEQVYGHLKFESGGHRVQRVPETESQGRIHTSACTVAVLPEIPDAELPEISPSDLRIDTFRSSGAGGQHVNTTDSAIRITHIPTGIVVECQDERSQHKNKAKAMSVLAARIRAAEVRKRQEAEASERRNLLGSGDRSDRNRTYNFPQGRVTDHRINLTLYRLDEVIEGKLDMLVQPIVNEYQADLLSALSEQD.

Residue glutamine 235 is modified to N5-methylglutamine. The segment covering 285–308 (KRQEAEASERRNLLGSGDRSDRNR) has biased composition (basic and acidic residues). Residues 285–313 (KRQEAEASERRNLLGSGDRSDRNRTYNFP) are disordered.

Belongs to the prokaryotic/mitochondrial release factor family. Post-translationally, methylated by PrmC. Methylation increases the termination efficiency of RF1.

The protein localises to the cytoplasm. Peptide chain release factor 1 directs the termination of translation in response to the peptide chain termination codons UAG and UAA. The sequence is that of Peptide chain release factor 1 from Photorhabdus laumondii subsp. laumondii (strain DSM 15139 / CIP 105565 / TT01) (Photorhabdus luminescens subsp. laumondii).